We begin with the raw amino-acid sequence, 126 residues long: Large ribosomal subunit protein bL12 (126 aa).

The protein belongs to the bacterial ribosomal protein bL12 family. In terms of assembly, homodimer. Part of the ribosomal stalk of the 50S ribosomal subunit. Forms a multimeric L10(L12)X complex, where L10 forms an elongated spine to which 2 to 4 L12 dimers bind in a sequential fashion. Binds GTP-bound translation factors.

Forms part of the ribosomal stalk which helps the ribosome interact with GTP-bound translation factors. Is thus essential for accurate translation. This chain is Large ribosomal subunit protein bL12, found in Caulobacter sp. (strain K31).